The chain runs to 365 residues: MGSTGETQMTPTQVSDEEAHLFAMQLASASVLPMILKTAIELDLLEIMAKAGPGAFLSTSEIASHLPTKNPDAPVMLDRILRLLASYSILTCSLKDLPDGKVERLYGLAPVCKFLTKNEDGVSVSPLCLMNQDKVLMESWYYLKDAILEGGIPFNKAYGMTAFEYHGTDPRFNKVFNKGMSDHSTITMKKILETYKGFEGLTSLVDVGGGTGAVVNTIVSKYPSIKGINFDLPHVIEDAPSYPGVEHVGGDMFVSVPNADAVFMKWICHDWSDAHCLKFLKNCYDALPENGKVILVECILPVAPDTSLATKGVVHVDVIMLAHNPGGKERTEKEFEGLANGAGFQGFEVMCCAFNTHVIEFRKKA.

Substrate is bound at residue Met-130–Leu-136. The segment at Ala-162 to Met-180 is substrate binding. S-adenosyl-L-methionine contacts are provided by Gly-208, Asp-231, Asp-251, Met-252, and Lys-265. The active-site Proton acceptor is the His-269.

This sequence belongs to the class I-like SAM-binding methyltransferase superfamily. Cation-independent O-methyltransferase family. COMT subfamily. As to quaternary structure, homodimer.

It carries out the reaction (E)-caffeate + S-adenosyl-L-methionine = (E)-ferulate + S-adenosyl-L-homocysteine + H(+). It participates in aromatic compound metabolism; phenylpropanoid biosynthesis. In terms of biological role, catalyzes the conversion of caffeic acid to ferulic acid and of 5-hydroxyferulic acid to sinapic acid. The resulting products may subsequently be converted to the corresponding alcohols that are incorporated into lignins. This chain is Caffeic acid 3-O-methyltransferase 1 (HOMT1), found in Populus kitakamiensis (Aspen).